Consider the following 520-residue polypeptide: Cobalt-zinc-cadmium resistance protein CzcB (520 aa).

The helical transmembrane segment at 9–29 (AAIAAIVLVGGVATGGVLLSG) threads the bilayer. Residues 28–85 (SGRSAPEEQGGHSESKGHGDTEHHGKQAAEADHKDDKSHGDGEHHEVKKGPNGGALFS) form a disordered region. Over residues 32–76 (APEEQGGHSESKGHGDTEHHGKQAAEADHKDDKSHGDGEHHEVKK) the composition is skewed to basic and acidic residues. A coiled-coil region spans residues 286–320 (EQKISAEQDYLSARNALQEAQISVQNAQQKLTAIG).

This sequence belongs to the membrane fusion protein (MFP) (TC 8.A.1) family.

The protein localises to the cell inner membrane. Functionally, czcA and CzcB together would act in zinc efflux nearly as effectively as the complete czc efflux system (CzcABC). The CzcB protein is thought to funnel zinc cations to the CzcA transport protein. This is Cobalt-zinc-cadmium resistance protein CzcB (czcB) from Cupriavidus metallidurans (strain ATCC 43123 / DSM 2839 / NBRC 102507 / CH34) (Ralstonia metallidurans).